The primary structure comprises 60 residues: Large ribosomal subunit protein bL32B (60 aa).

A compositionally biased stretch (basic residues) spans 1 to 19 (MAVPKRKMSRANTRHRRSQ). The interval 1–20 (MAVPKRKMSRANTRHRRSQW) is disordered.

The protein belongs to the bacterial ribosomal protein bL32 family.

The protein is Large ribosomal subunit protein bL32B of Saccharopolyspora erythraea (strain ATCC 11635 / DSM 40517 / JCM 4748 / NBRC 13426 / NCIMB 8594 / NRRL 2338).